The following is an 886-amino-acid chain: Protein suppressor of hairy wing (886 aa).

2 disordered regions span residues 24-62 (SVSPSKDKRPTRMKLLNNLSASSPQTYPPKTDKRSGIKG) and 167-211 (DEVV…KNSG). Residues 184–201 (VTEEEEEEEEDDLDEEGD) are compositionally biased toward acidic residues. The C2H2-type 1; atypical zinc finger occupies 221–243 (HVCGKCYKTFRRLMSLKKHLEFC). The segment at 291 to 314 (INCPDCPKSFKTQTSYERHIFITH) adopts a C2H2-type 2 zinc-finger fold. The C2H2-type 3; atypical zinc-finger motif lies at 320 to 342 (YPCSICNANLRSEALLKLHEEQH). C2H2-type zinc fingers lie at residues 349-367 (YACKICGKDFTRSYHLKRH), 381-403 (MSCKVCDRVFYRLDNLRSHLKHH), 414-436 (YMCHVCKNCFYSLSTLNIHIRTH), 442-464 (FDCDLCDKKLSALVALKKHRRYH), 470-492 (YSCTVCNQAFAVKEVLNRHMKRH), 498-520 (HKCEECGKSFIQATQLRTHSKTH), 524-546 (FACDMCEEKFKTEKQLERHVKEH), 554-578 (FSCTECKRHFRNTAQLKQHMDAGDH), and 600-623 (TDCAICDKNFDSSETLRKHIRSVH). Over residues 571–587 (QHMDAGDHSEKSGEKPQ) the composition is skewed to basic and acidic residues. The disordered stretch occupies residues 571 to 594 (QHMDAGDHSEKSGEKPQRAKRSST).

It is found in the nucleus. Component of the gypsy chromatin insulator complex which is required for the function of the gypsy chromatin insulator and other endogenous chromatin insulators. Chromatin insulators are regulatory elements which establish independent domains of transcriptional activity within eukaryotic genomes. Insulators have two defining properties; they can block the communication between an enhancer and a promoter when placed between them and can also buffer transgenes from position effect variegation (PEV). Insulators are proposed to structure the chromatin fiber into independent domains of differing transcriptional potential by promoting the formation of distinct chromatin loops. This chromatin looping may involve the formation of insulator bodies, where homotypic interactions between individual subunits of the insulator complex could promote the clustering of widely spaced insulators at the nuclear periphery. Within the gypsy insulator complex, this protein binds specifically to a region of the gypsy element located 3' of the 5' long terminal repeat (LTR), and may also mediate interaction with other endogenous insulators at sites distinct from those recognized by Cp190. Cooperates with pita and cliff to recruit Cp190 and regulate insulator function at the front-ultraabdominal (Fub) boundary. In Drosophila ananassae (Fruit fly), this protein is Protein suppressor of hairy wing (su(Hw)).